The following is a 322-amino-acid chain: Extracellular metalloprotease AFUA_1G07730 (322 aa).

The signal sequence occupies residues Met-1–Ala-22. 2 N-linked (GlcNAc...) asparagine glycosylation sites follow: Asn-123 and Asn-197. His-233 is a Zn(2+) binding site. Glu-234 is an active-site residue. Residue His-237 participates in Zn(2+) binding. Cysteines 272 and 299 form a disulfide.

Belongs to the peptidase M43B family.

Its subcellular location is the secreted. Its function is as follows. Secreted metalloproteinase that allows assimilation of proteinaceous substrates. Plays a pivotal role as a pathogenicity determinant during infections and contributes to the ability of the pathogen to persist within the mammalian host. The protein is Extracellular metalloprotease AFUA_1G07730 of Aspergillus fumigatus (strain ATCC MYA-4609 / CBS 101355 / FGSC A1100 / Af293) (Neosartorya fumigata).